A 91-amino-acid chain; its full sequence is Probable Fe(2+)-trafficking protein (91 aa).

This sequence belongs to the Fe(2+)-trafficking protein family.

Could be a mediator in iron transactions between iron acquisition and iron-requiring processes, such as synthesis and/or repair of Fe-S clusters in biosynthetic enzymes. This chain is Probable Fe(2+)-trafficking protein, found in Burkholderia cenocepacia (strain ATCC BAA-245 / DSM 16553 / LMG 16656 / NCTC 13227 / J2315 / CF5610) (Burkholderia cepacia (strain J2315)).